We begin with the raw amino-acid sequence, 89 residues long: UPF0223 protein BCE_4008 (89 aa).

This sequence belongs to the UPF0223 family.

The protein is UPF0223 protein BCE_4008 of Bacillus cereus (strain ATCC 10987 / NRS 248).